Here is a 1025-residue protein sequence, read N- to C-terminus: Collagen alpha-1(VI) chain (1025 aa).

The N-terminal stretch at M1 to T19 is a signal peptide. An N-terminal globular domain region spans residues Q20–R255. Positions D36–I234 constitute a VWFA 1 domain. A glycan (N-linked (GlcNAc...) asparagine) is linked at N211. The tract at residues Q252–P588 is disordered. Positions G256 to D591 are triple-helical region. The Cell attachment site motif lies at R261 to D263. Composition is skewed to basic and acidic residues over residues E267–D284 and K300–K333. Short sequence motifs (cell attachment site) lie at residues R441–D443 and R477–D479. N515 and N536 each carry an N-linked (GlcNAc...) asparagine glycan. Residues G549 to N559 are compositionally biased toward acidic residues. Residues P578–P588 are compositionally biased toward pro residues. A C-terminal globular domain region spans residues E592 to G1025. VWFA domains lie at D614 to I802 and D826 to V1018. Residues N801 and N893 are each glycosylated (N-linked (GlcNAc...) asparagine).

The protein belongs to the type VI collagen family. As to quaternary structure, trimers composed of three different chains: alpha-1(VI), alpha-2(VI), and alpha-3(VI) or alpha-4(VI) or alpha-5(VI) or alpha-6(VI). Post-translationally, prolines at the third position of the tripeptide repeating unit (G-X-Y) are hydroxylated in some or all of the chains.

The protein resides in the secreted. The protein localises to the extracellular space. It localises to the extracellular matrix. In terms of biological role, collagen VI acts as a cell-binding protein. The polypeptide is Collagen alpha-1(VI) chain (Col6a1) (Mus musculus (Mouse)).